The chain runs to 1077 residues: MKGACILAWLFSSLGVWRLARPETQDPAKCQRAEHPVVSYKEIGPWLREFRAENAVDFSRLTFDPGQKELVVGARNYLFRLELEDLSLIQAVEWECDEATKKACYSKGKSKEECQNYIRVLLVGGDRLFTCGTNAFTPVCTIRSLSNLTEIHDQISGMARCPYSPQHNSTALLTASGELYAATAMDFPGRDPAIYRSLGTLPPLRTAQYNSKWLNEPNFVSSYDIGNFTYFFFRENAVEHDCGKTVFSRPARVCKNDIGGRFLLEDTWTTFMKARLNCSRPGEVPFYYNELQGTFFLPELDLIYGIFTTNVNSIASSAVCVFNLSAISQAFNGPFKYQENSRSAWLPYPNPNPNFQCGTMDQGLYVNLTERNLQDAQKFILMHEVVQPVTTVPSFMEDNSRFSHLAVDVVQGRETLVHIIYLGTDYGTIKKVRAPLSQSSGSCLLEEIELFPERRSEPIRSLQILHSQSVLFVGLQEHVAKIPLKRCHFHQTRSACIGAQDPYCGWDAVMKKCTSLEESLSMTQWDQSIPTCPTRNLTVDGSFGPWSPWTPCTHTDGTAVGSCLCRSRSCDRPAPQCGGWQCEGPRMEITNCSRNGGWTPWTSWSPCSTTCGIGFQVRQRSCSNPTPRHGGRVCVGQNREERYCNEHLLCPPHVFWTGWGPWERCTAQCGGGIQARRRTCENGPDCAGSNVEYHPCNTNACPELKKTTPWTPWTPVNISDNGGHYEQRFRYTCKARLPDPNLLEVGRQRIEMRYCSSDGTSGCSTDGLSGDFLRAGRYSAHTVNGAWSAWTSWSQCSRDCSRGIRNRKRVCNNPEPKFGGMPCLGPSLEFQECNILPCPVDGVWSCWSSWSKCSATCGGGHYMRTRSCSNPAPAYGGDICLGLHTEEALCNTQTCPESWSEWSDWSVCDASGTQVRARQCILLFPVGSQCSGNTTESRPCVFDSNFIPEVSVARSSSVEEKRCGEFNMFHMFHMMAVGLSSSILGCLLTLLVYTYCQRYQQQSHDATVIHPVSPAALNSSITNHINKLDKYDSVEAIKAFNKNNLILEERNKYFNPHLTGKTYSNAYFTDLNNYDEY.

Positions 1-21 (MKGACILAWLFSSLGVWRLAR) are cleaved as a signal peptide. At 22 to 971 (PETQDPAKCQ…RCGEFNMFHM (950 aa)) the chain is on the extracellular side. In terms of domain architecture, Sema spans 35-484 (HPVVSYKEIG…LQEHVAKIPL (450 aa)). 2 disulfide bridges follow: C104/C114 and C131/C140. 4 N-linked (GlcNAc...) asparagine glycosylation sites follow: N147, N168, N227, and N277. Disulfide bonds link C254-C357 and C278-C320. Residues N323 and N367 are each glycosylated (N-linked (GlcNAc...) asparagine). Cystine bridges form between C487/C504 and C496/C513. N-linked (GlcNAc...) asparagine glycosylation is found at N536 and N591. TSP type-1 domains are found at residues 540 to 593 (DGSF…TNCS), 595 to 651 (NGGW…LLCP), 653 to 702 (HVFW…NACP), 707 to 765 (TTPW…GCST), 784 to 839 (NGAW…LPCP), 841 to 896 (DGVW…QTCP), and 897 to 944 (ESWS…VFDS). 6 disulfides stabilise this stretch: C607–C644, C611–C650, C622–C634, C665–C696, C669–C701, and C680–C686. A glycan (N-linked (GlcNAc...) asparagine) is linked at N717. Disulfide bonds link C796/C833, C800/C838, C811/C823, C853/C890, C857/C895, and C868/C880. N933 is a glycosylation site (N-linked (GlcNAc...) asparagine). A helical membrane pass occupies residues 972-992 (FHMMAVGLSSSILGCLLTLLV). Over 993 to 1077 (YTYCQRYQQQ…FTDLNNYDEY (85 aa)) the chain is Cytoplasmic.

The protein belongs to the semaphorin family. As to quaternary structure, binds PLXNB3. As to expression, in adult, detected in liver, brain, kidney, heart, lung and spleen.

It localises to the membrane. Functionally, bifunctional axonal guidance cue regulated by sulfated proteoglycans; attractive effects result from interactions with heparan sulfate proteoglycans (HSPGs), while the inhibitory effects depend on interactions with chondroitin sulfate proteoglycans (CSPGs). Ligand for receptor PLXNB3. In glioma cells, SEMA5A stimulation of PLXNB3 results in the disassembly of F-actin stress fibers, disruption of focal adhesions and cellular collapse as well as inhibition of cell migration and invasion through ARHGDIA-mediated inactivation of RAC1. May promote angiogenesis by increasing endothelial cell proliferation and migration and inhibiting apoptosis. This chain is Semaphorin-5A (Sema5a), found in Mus musculus (Mouse).